The chain runs to 222 residues: 7-cyano-7-deazaguanine synthase (222 aa).

14-24 (FSGGQDSTTCL) contacts ATP. Residues Cys190, Cys199, Cys202, and Cys205 each coordinate Zn(2+).

Belongs to the QueC family. As to quaternary structure, homodimer. It depends on Zn(2+) as a cofactor.

It catalyses the reaction 7-carboxy-7-deazaguanine + NH4(+) + ATP = 7-cyano-7-deazaguanine + ADP + phosphate + H2O + H(+). It participates in purine metabolism; 7-cyano-7-deazaguanine biosynthesis. Catalyzes the ATP-dependent conversion of 7-carboxy-7-deazaguanine (CDG) to 7-cyano-7-deazaguanine (preQ(0)). The chain is 7-cyano-7-deazaguanine synthase from Staphylococcus aureus (strain Mu3 / ATCC 700698).